A 338-amino-acid chain; its full sequence is D-erythrose-4-phosphate dehydrogenase (338 aa).

11 to 12 (RI) is an NAD(+) binding site. Substrate contacts are provided by residues 153 to 155 (SCT), Arg199, 212 to 213 (TK), and Arg235. Catalysis depends on Cys154, which acts as the Nucleophile. Asn317 contributes to the NAD(+) binding site.

This sequence belongs to the glyceraldehyde-3-phosphate dehydrogenase family. Epd subfamily. In terms of assembly, homotetramer.

The protein localises to the cytoplasm. The enzyme catalyses D-erythrose 4-phosphate + NAD(+) + H2O = 4-phospho-D-erythronate + NADH + 2 H(+). The protein operates within cofactor biosynthesis; pyridoxine 5'-phosphate biosynthesis; pyridoxine 5'-phosphate from D-erythrose 4-phosphate: step 1/5. Functionally, catalyzes the NAD-dependent conversion of D-erythrose 4-phosphate to 4-phosphoerythronate. The protein is D-erythrose-4-phosphate dehydrogenase of Shewanella putrefaciens (strain CN-32 / ATCC BAA-453).